Reading from the N-terminus, the 339-residue chain is Meiotic recombination protein rec7 (339 aa).

Functionally, may be involved primarily in the early steps of meiotic recombination. The chain is Meiotic recombination protein rec7 (rec7) from Schizosaccharomyces pombe (strain 972 / ATCC 24843) (Fission yeast).